Reading from the N-terminus, the 177-residue chain is UPF0114 protein jhp_0175 (177 aa).

3 helical membrane passes run 15–35 (WLLA…GYVF), 54–74 (LVLS…VLMV), and 145–165 (PIFW…LTAV).

This sequence belongs to the UPF0114 family.

Its subcellular location is the cell membrane. The chain is UPF0114 protein jhp_0175 from Helicobacter pylori (strain J99 / ATCC 700824) (Campylobacter pylori J99).